Here is a 225-residue protein sequence, read N- to C-terminus: Cytidylate kinase (225 aa).

10 to 18 provides a ligand contact to ATP; it reads GPASSGKST.

It belongs to the cytidylate kinase family. Type 1 subfamily.

The protein localises to the cytoplasm. It carries out the reaction CMP + ATP = CDP + ADP. The catalysed reaction is dCMP + ATP = dCDP + ADP. This Streptococcus suis (strain 98HAH33) protein is Cytidylate kinase.